Here is a 379-residue protein sequence, read N- to C-terminus: Glutamate 5-kinase (379 aa).

Lys-19 contributes to the ATP binding site. Substrate contacts are provided by Ser-59, Asp-146, and Asn-158. ATP contacts are provided by residues 178-179 (TD) and 220-226 (TGGMATK). Positions 285–363 (SGDIIIDDGA…KDIISILGHD (79 aa)) constitute a PUA domain.

The protein belongs to the glutamate 5-kinase family.

The protein localises to the cytoplasm. It catalyses the reaction L-glutamate + ATP = L-glutamyl 5-phosphate + ADP. The protein operates within amino-acid biosynthesis; L-proline biosynthesis; L-glutamate 5-semialdehyde from L-glutamate: step 1/2. In terms of biological role, catalyzes the transfer of a phosphate group to glutamate to form L-glutamate 5-phosphate. This is Glutamate 5-kinase from Vibrio parahaemolyticus serotype O3:K6 (strain RIMD 2210633).